The following is a 569-amino-acid chain: Ribonuclease J (569 aa).

Zn(2+) is bound by residues His81, His83, Asp85, His86, His150, and Asp172. Residue 373-377 (HASGH) coordinates substrate. Position 399 (His399) interacts with Zn(2+).

Belongs to the metallo-beta-lactamase superfamily. RNA-metabolizing metallo-beta-lactamase-like family. Bacterial RNase J subfamily. Homodimer, may be a subunit of the RNA degradosome. Zn(2+) is required as a cofactor.

It localises to the cytoplasm. Functionally, an RNase that has 5'-3' exonuclease and possibly endoonuclease activity. Involved in maturation of rRNA and in some organisms also mRNA maturation and/or decay. The chain is Ribonuclease J from Mycoplasma genitalium (strain ATCC 33530 / DSM 19775 / NCTC 10195 / G37) (Mycoplasmoides genitalium).